The chain runs to 518 residues: Retinal dehydrogenase 2 (518 aa).

Phosphotyrosine is present on Tyr168. Residues 184–186 (IPW), 210–213 (KPAE), and 264–266 (STE) each bind NAD(+). The active-site Proton acceptor is Glu286. Cys320 serves as the catalytic Nucleophile. Phosphoserine is present on Ser351. Residues 366 to 370 (KQYNK) and Glu417 contribute to the NAD(+) site.

Belongs to the aldehyde dehydrogenase family. As to quaternary structure, homotetramer.

Its subcellular location is the cytoplasm. The catalysed reaction is retinal + NAD(+) + H2O = retinoate + NADH + 2 H(+). It carries out the reaction all-trans-retinal + NAD(+) + H2O = all-trans-retinoate + NADH + 2 H(+). It catalyses the reaction all-trans-13,14-dihydroretinal + NAD(+) + H2O = all-trans-13,14-dihydroretinoate + NADH + 2 H(+). It participates in cofactor metabolism; retinol metabolism. In terms of biological role, catalyzes the NAD-dependent oxidation of aldehyde substrates, such as all-trans-retinal and all-trans-13,14-dihydroretinal, to their corresponding carboxylic acids, all-trans-retinoate and all-trans-13,14-dihydroretinoate, respectively. Retinoate signaling is critical for the transcriptional control of many genes, for instance it is crucial for initiation of meiosis in both male and female. Recognizes retinal as substrate, both in its free form and when bound to cellular retinol-binding protein. Can metabolize octanal and decanal, but has only very low activity with benzaldehyde, acetaldehyde and propanal. Displays complete lack of activity with citral. The sequence is that of Retinal dehydrogenase 2 (ALDH1A2) from Homo sapiens (Human).